The primary structure comprises 122 residues: Urease subunit beta (122 aa).

The protein belongs to the urease beta subunit family. Heterotrimer of UreA (gamma), UreB (beta) and UreC (alpha) subunits. Three heterotrimers associate to form the active enzyme.

Its subcellular location is the cytoplasm. The catalysed reaction is urea + 2 H2O + H(+) = hydrogencarbonate + 2 NH4(+). The protein operates within nitrogen metabolism; urea degradation; CO(2) and NH(3) from urea (urease route): step 1/1. The sequence is that of Urease subunit beta from Acetivibrio thermocellus (strain ATCC 27405 / DSM 1237 / JCM 9322 / NBRC 103400 / NCIMB 10682 / NRRL B-4536 / VPI 7372) (Clostridium thermocellum).